The following is a 211-amino-acid chain: Stromal cell-derived factor 2 (211 aa).

The N-terminal stretch at 1–18 is a signal peptide; that stretch reads MAVVSLLLFGGLWSAVGS. 3 consecutive MIR domains span residues 21–75, 83–138, and 139–193; these read LAVV…IRGK, GTPI…VLCN, and GPYW…AMEG.

The protein resides in the secreted. The protein is Stromal cell-derived factor 2 (SDF2) of Bos taurus (Bovine).